The sequence spans 544 residues: Chromosomal replication initiator protein DnaA (544 aa).

Residues 1-71 form a domain I, interacts with DnaA modulators region; that stretch reads MNDFWQHCSA…ADMARDFWHT (71 aa). The tract at residues 71-207 is domain II; the sequence is TPIDVQFVLD…GETDSMYERS (137 aa). Low complexity predominate over residues 90–105; it reads AAAPAPASARPASAPG. 2 disordered regions span residues 90 to 111 and 180 to 203; these read AAAPAPASARPASAPGSMGGSA and AAARRTWRPGQSAGSNGNGETDSM. The span at 191 to 200 shows a compositional bias: polar residues; it reads SAGSNGNGET. Positions 208–424 are domain III, AAA+ region; it reads KLNPVLTFDN…GALRKILAYS (217 aa). Residues Gly-252, Gly-254, Lys-255, and Thr-256 each contribute to the ATP site. Residues 425–544 form a domain IV, binds dsDNA region; it reads KFHGREITIE…LHVLEQTLKG (120 aa).

The protein belongs to the DnaA family. Oligomerizes as a right-handed, spiral filament on DNA at oriC.

The protein localises to the cytoplasm. Its function is as follows. Plays an essential role in the initiation and regulation of chromosomal replication. ATP-DnaA binds to the origin of replication (oriC) to initiate formation of the DNA replication initiation complex once per cell cycle. Binds the DnaA box (a 9 base pair repeat at the origin) and separates the double-stranded (ds)DNA. Forms a right-handed helical filament on oriC DNA; dsDNA binds to the exterior of the filament while single-stranded (ss)DNA is stabiized in the filament's interior. The ATP-DnaA-oriC complex binds and stabilizes one strand of the AT-rich DNA unwinding element (DUE), permitting loading of DNA polymerase. After initiation quickly degrades to an ADP-DnaA complex that is not apt for DNA replication. Binds acidic phospholipids. The chain is Chromosomal replication initiator protein DnaA from Paraburkholderia xenovorans (strain LB400).